We begin with the raw amino-acid sequence, 208 residues long: Pyridoxine/pyridoxamine 5'-phosphate oxidase (208 aa).

FMN is bound by residues R55–K60, Y70–T71, K77, and Q99. K60 is a binding site for substrate. Residues Y117, R121, and S125 each coordinate substrate. FMN-binding positions include Q134 to S135 and W180. R186–H188 provides a ligand contact to substrate. R190 is a binding site for FMN.

This sequence belongs to the pyridoxamine 5'-phosphate oxidase family. Homodimer. The cofactor is FMN.

It carries out the reaction pyridoxamine 5'-phosphate + O2 + H2O = pyridoxal 5'-phosphate + H2O2 + NH4(+). The enzyme catalyses pyridoxine 5'-phosphate + O2 = pyridoxal 5'-phosphate + H2O2. It functions in the pathway cofactor metabolism; pyridoxal 5'-phosphate salvage; pyridoxal 5'-phosphate from pyridoxamine 5'-phosphate: step 1/1. Its pathway is cofactor metabolism; pyridoxal 5'-phosphate salvage; pyridoxal 5'-phosphate from pyridoxine 5'-phosphate: step 1/1. In terms of biological role, catalyzes the oxidation of either pyridoxine 5'-phosphate (PNP) or pyridoxamine 5'-phosphate (PMP) into pyridoxal 5'-phosphate (PLP). The protein is Pyridoxine/pyridoxamine 5'-phosphate oxidase of Pelagibacter ubique (strain HTCC1062).